An 830-amino-acid polypeptide reads, in one-letter code: Scavenger receptor class F member 1 (830 aa).

Residues 1–19 (MGLGLLLPLLLLWTRGTQG) form the signal peptide. At 20–421 (SELDPKGQHV…CQPGSGSRDT (402 aa)) the chain is on the extracellular side. 4 consecutive EGF-like domains span residues 53–87 (TIPICEGPDACQKDEVCVKPGLCRCKPGFFGAHCS), 95–130 (WGPDCRESCPCHPHGQCEPATGACQCQADRWGARCE), 155–191 (WSSTCRRPCQCNTAAARCEQATGACVCKPGWWGRRCS), and 215–249 (WGPECQQQCECVRGRCSAASGECTCPPGFRGARCE). 12 disulfide bridges follow: Cys-57/Cys-69, Cys-63/Cys-75, Cys-77/Cys-86, Cys-99/Cys-111, Cys-105/Cys-118, Cys-120/Cys-129, Cys-159/Cys-172, Cys-165/Cys-179, Cys-181/Cys-190, Cys-219/Cys-230, Cys-225/Cys-237, and Cys-239/Cys-248. An N-linked (GlcNAc...) asparagine glycan is attached at Asn-289. 2 consecutive EGF-like domains span residues 302–339 (FGESCEQQCPHCRHGEACEPDTGHCQRCDPGWLGPRCE) and 351–382 (CGSTCPTCVQGSCDTVTGDCVCSAGYWGPSCN). 6 disulfide bridges follow: Cys-306-Cys-319, Cys-313-Cys-326, Cys-329-Cys-338, Cys-355-Cys-363, Cys-358-Cys-370, and Cys-372-Cys-381. N-linked (GlcNAc...) asparagine glycans are attached at residues Asn-382 and Asn-393. A helical transmembrane segment spans residues 422–442 (ALIAGSLVPLLLLFLGLACCA). The Cytoplasmic portion of the chain corresponds to 443–830 (CCCWAPRSDL…VVPISRPPEP (388 aa)). Disordered regions lie at residues 516-539 (GWATDDSFSSDPESGEADEVPAYC), 581-688 (SLAR…SGPV), and 715-830 (FQKG…PPEP). A phosphoserine mark is found at Ser-589 and Ser-606. The segment covering 634–643 (ESTGPEEAEA) has biased composition (acidic residues). The segment covering 644–653 (PESFPAAASP) has biased composition (low complexity).

As to quaternary structure, heterophilic interaction with SREC2 via its extracellular domain. The heterophilic interaction is suppressed by the presence of ligand such as Ac-LDL. Interacts with AVIL. In terms of tissue distribution, endothelial cells.

The protein resides in the membrane. Mediates the binding and degradation of acetylated low density lipoprotein (Ac-LDL). Mediates heterophilic interactions, suggesting a function as adhesion protein. Plays a role in the regulation of neurite-like outgrowth. The protein is Scavenger receptor class F member 1 (SCARF1) of Homo sapiens (Human).